Consider the following 360-residue polypeptide: Glutamate--cysteine ligase (360 aa).

This sequence belongs to the glutamate--cysteine ligase type 2 family. YbdK subfamily.

It catalyses the reaction L-cysteine + L-glutamate + ATP = gamma-L-glutamyl-L-cysteine + ADP + phosphate + H(+). Catalyzes the synthesis of gamma-glutamylcysteine (gamma-GC), the main low-molecular-weight thiol compound instead of glutathione in halophilic archaea. In Halobacterium salinarum (strain ATCC 29341 / DSM 671 / R1), this protein is Glutamate--cysteine ligase.